The primary structure comprises 394 residues: MPDVYGPGASQNDPIPAHAPRQQVLPEEYQRASDDELHRRIREAKDTLGDKVVILGHFYQRDEVIQHADFVGDSFQLARAAKTRPEAEAIVFCGVHFMAETADLLSTDEQSVILPNLAAGCSMADMADLDSVEDCWEQLTSIYGDDTLIPVTYMNSSAALKGFVGEHGGIVCTSSNARSVLEWAFERGQRVLFFPDQHLGRNTAKAMGIGIDQMPLWNPNKPLGGNTVSELENAKVLLWHGFCSVHKRFTVEQINKARAEYPDVHVIVHPESPMPVVDAADSSGSTDFIVKAIQAAPAGSTFAIGTEINLVQRLAAQYPQHTIFCLDPVICPCSTMYRIHPGYLAWALEELVAGNVINQISVSESVAAPARVALERMLSVVPAAPVTPSSSKDA.

Residues histidine 57 and serine 74 each coordinate iminosuccinate. Cysteine 121 is a binding site for [4Fe-4S] cluster. Iminosuccinate is bound by residues 153-155 and serine 174; that span reads YMN. Cysteine 243 contacts [4Fe-4S] cluster. Iminosuccinate contacts are provided by residues 269-271 and threonine 286; that span reads HPE. Cysteine 333 serves as a coordination point for [4Fe-4S] cluster.

The protein belongs to the quinolinate synthase family. Type 3 subfamily. Requires [4Fe-4S] cluster as cofactor.

Its subcellular location is the cytoplasm. It carries out the reaction iminosuccinate + dihydroxyacetone phosphate = quinolinate + phosphate + 2 H2O + H(+). Its pathway is cofactor biosynthesis; NAD(+) biosynthesis; quinolinate from iminoaspartate: step 1/1. Catalyzes the condensation of iminoaspartate with dihydroxyacetone phosphate to form quinolinate. In Corynebacterium glutamicum (strain ATCC 13032 / DSM 20300 / JCM 1318 / BCRC 11384 / CCUG 27702 / LMG 3730 / NBRC 12168 / NCIMB 10025 / NRRL B-2784 / 534), this protein is Quinolinate synthase.